The chain runs to 196 residues: NADH-quinone oxidoreductase subunit B (196 aa).

[4Fe-4S] cluster is bound by residues C75, C76, C140, and C170.

Belongs to the complex I 20 kDa subunit family. In terms of assembly, NDH-1 is composed of 14 different subunits. Subunits NuoB, C, D, E, F, and G constitute the peripheral sector of the complex. Requires [4Fe-4S] cluster as cofactor.

It localises to the cell inner membrane. The enzyme catalyses a quinone + NADH + 5 H(+)(in) = a quinol + NAD(+) + 4 H(+)(out). NDH-1 shuttles electrons from NADH, via FMN and iron-sulfur (Fe-S) centers, to quinones in the respiratory chain. Couples the redox reaction to proton translocation (for every two electrons transferred, four hydrogen ions are translocated across the cytoplasmic membrane), and thus conserves the redox energy in a proton gradient. The chain is NADH-quinone oxidoreductase subunit B from Caulobacter sp. (strain K31).